Consider the following 209-residue polypeptide: Large ribosomal subunit protein bL9 (209 aa).

Residues 181–209 (EASEEGQELAAQREATEDAGADESEETEA) are disordered. Over residues 197 to 209 (EDAGADESEETEA) the composition is skewed to acidic residues.

This sequence belongs to the bacterial ribosomal protein bL9 family.

In terms of biological role, binds to the 23S rRNA. The chain is Large ribosomal subunit protein bL9 from Maricaulis maris (strain MCS10) (Caulobacter maris).